Here is a 545-residue protein sequence, read N- to C-terminus: MDTSPHSKPSSSSASQSSHSPSPAPVTAPRKTRDSGLCMTQDIPEIPTHCIDNLNSHQLGRGTYGIVEKTRYRRSRNHEYRPAAIKYSSPIHLATLIREAKVMWALRDHSNIIKIYGLYRDARHGQGVVMEYMDCGSMSELIYDRKSIDYTIDHVASWLYQMASAVNTFHRNDQVHRDLKLQNMLLCDRYRTMKLCDFGTFTAMHQSMTSNRGTPITMAPEVFRCEEYNQKSDIYSIGIIMWQMIARNHPYNRNLSVPGLLYNVATASLRPPELDCNPILSDFYKQCWHDDPVSRPTAAECLQYFTALKTEYPNGNVPLADANTNRPVETPPPRVHRPSGLGSASGSGLGTNGRTPTASNHLNAPQAVNTHRRNRSETIQMKPELPYPVMPGEVAASSSGAFRGPRSQSEAKNLRDAGRSQSGQRHPHRNAPPIPIDDRRDSNESNEKDAIFMELLRNDDTRPVDPDARDEASLDIFHQHCSSNKEYADALLLKKEVLRAKHELLSRWPQHQRHVELLERQNYLEQEIAKLEYNSDDDFSITERL.

The span at Met-1–Pro-21 shows a compositional bias: low complexity. The disordered stretch occupies residues Met-1–Ser-35. The Protein kinase domain maps to Asn-53 to Leu-308. ATP contacts are provided by residues Leu-59 to Val-67 and Lys-86. Asp-178 acts as the Proton acceptor in catalysis. The interval Asn-316 to Glu-444 is disordered. Composition is skewed to polar residues over residues Asn-352 to Asn-369 and Ala-396 to Ala-411.

Belongs to the protein kinase superfamily. STE Ser/Thr protein kinase family. MAP kinase kinase kinase subfamily. In terms of assembly, interacts with, and is activated by, tap-1. The cofactor is Mg(2+).

The catalysed reaction is L-seryl-[protein] + ATP = O-phospho-L-seryl-[protein] + ADP + H(+). The enzyme catalyses L-threonyl-[protein] + ATP = O-phospho-L-threonyl-[protein] + ADP + H(+). Its function is as follows. Part of the Wnt signaling pathway essential for the specification of the mesodermal cell fate in early embryos. Stimulates the wrm-1/lit-1-dependent phosphorylation of pop-1 and plays a role in the initial nuclear accumulation of wrm-1. This chain is Mitogen-activated protein kinase kinase kinase mom-4, found in Caenorhabditis briggsae.